A 74-amino-acid chain; its full sequence is Lambda-hexatoxin-Hv1d (74 aa).

The N-terminal stretch at 1-22 (MNTATCFIVLLVVATVIGGIEA) is a signal peptide. The propeptide occupies 23-35 (GESDMRKDVMGLF). Disulfide bonds link Cys-40-Cys-54, Cys-47-Cys-59, Cys-50-Cys-51, and Cys-53-Cys-69.

Belongs to the neurotoxin 11 (kappa toxin) family. In terms of tissue distribution, expressed by the venom gland.

Its subcellular location is the secreted. Its function is as follows. This excitatory toxin inhibits insect calcium-activated potassium (KCa) channels (Slo-type). The polypeptide is Lambda-hexatoxin-Hv1d (Hadronyche versuta (Blue mountains funnel-web spider)).